The following is a 216-amino-acid chain: Protein GrpE (216 aa).

Disordered stretches follow at residues 1–45 and 185–216; these read MTEE…LDPT and RVAV…TEEV. A compositionally biased stretch (acidic residues) spans 205-216; that stretch reads TDDEESGGTEEV.

The protein belongs to the GrpE family. As to quaternary structure, homodimer.

The protein resides in the cytoplasm. Its function is as follows. Participates actively in the response to hyperosmotic and heat shock by preventing the aggregation of stress-denatured proteins, in association with DnaK and GrpE. It is the nucleotide exchange factor for DnaK and may function as a thermosensor. Unfolded proteins bind initially to DnaJ; upon interaction with the DnaJ-bound protein, DnaK hydrolyzes its bound ATP, resulting in the formation of a stable complex. GrpE releases ADP from DnaK; ATP binding to DnaK triggers the release of the substrate protein, thus completing the reaction cycle. Several rounds of ATP-dependent interactions between DnaJ, DnaK and GrpE are required for fully efficient folding. The polypeptide is Protein GrpE (Streptomyces griseus subsp. griseus (strain JCM 4626 / CBS 651.72 / NBRC 13350 / KCC S-0626 / ISP 5235)).